A 526-amino-acid chain; its full sequence is TBC1 domain family member 19 (526 aa).

The 222-residue stretch at 251-472 folds into the Rab-GAP TBC domain; the sequence is GSPTALRAEL…LLWDRILGYN (222 aa).

Its function is as follows. May act as a GTPase-activating protein for Rab family protein(s). This chain is TBC1 domain family member 19 (TBC1D19), found in Homo sapiens (Human).